The primary structure comprises 128 residues: Cyclin-dependent protein kinase inhibitor SMR1 (128 aa).

The tract at residues 17 to 74 (PIKIRSKTSKTKKDEGDDDEDDLRCSTPTSQEHKIPAVVDSPPPPPRKPRPPPSAPSA) is disordered. Over residues 57-71 (SPPPPPRKPRPPPSA) the composition is skewed to pro residues.

Interacts with CDKB1-1. Interacts with CPR5. As to expression, expressed in roots, leaves, stems, siliques and flowers. Expressed in the root elongation zone.

Its subcellular location is the nucleus. Its function is as follows. Probable cyclin-dependent protein kinase (CDK) inhibitor that functions as a repressor of mitosis in the endoreduplication cell cycle. Cooperates with SIM and SMR2 to promote endoreplication during leaf development. Specifically regulates endoreduplication in epidermal pavement cells to produce the cell size pattern. Is necessary for giant cell formation. Positive regulator of effector-triggered immunity (ETI). This is Cyclin-dependent protein kinase inhibitor SMR1 from Arabidopsis thaliana (Mouse-ear cress).